The sequence spans 547 residues: Chaperonin GroEL (547 aa).

Residues 30–33, Lys51, 87–91, Gly415, and Asp496 contribute to the ATP site; these read TLGP and DGTTT. Residues 528–547 are disordered; the sequence is KEGAGAGGGMPDMGGMGGMM. Gly residues predominate over residues 531 to 547; the sequence is AGAGGGMPDMGGMGGMM.

This sequence belongs to the chaperonin (HSP60) family. In terms of assembly, forms a cylinder of 14 subunits composed of two heptameric rings stacked back-to-back. Interacts with the co-chaperonin GroES.

Its subcellular location is the cytoplasm. It carries out the reaction ATP + H2O + a folded polypeptide = ADP + phosphate + an unfolded polypeptide.. In terms of biological role, together with its co-chaperonin GroES, plays an essential role in assisting protein folding. The GroEL-GroES system forms a nano-cage that allows encapsulation of the non-native substrate proteins and provides a physical environment optimized to promote and accelerate protein folding. The sequence is that of Chaperonin GroEL from Dinoroseobacter shibae (strain DSM 16493 / NCIMB 14021 / DFL 12).